The following is a 317-amino-acid chain: Beta-ketoacyl-[acyl-carrier-protein] synthase III (317 aa).

Residues cysteine 112 and histidine 244 contribute to the active site. The segment at 245–249 is ACP-binding; it reads QANIR. Asparagine 274 is a catalytic residue.

It belongs to the thiolase-like superfamily. FabH family. As to quaternary structure, homodimer.

Its subcellular location is the cytoplasm. It catalyses the reaction malonyl-[ACP] + acetyl-CoA + H(+) = 3-oxobutanoyl-[ACP] + CO2 + CoA. The protein operates within lipid metabolism; fatty acid biosynthesis. Catalyzes the condensation reaction of fatty acid synthesis by the addition to an acyl acceptor of two carbons from malonyl-ACP. Catalyzes the first condensation reaction which initiates fatty acid synthesis and may therefore play a role in governing the total rate of fatty acid production. Possesses both acetoacetyl-ACP synthase and acetyl transacylase activities. Its substrate specificity determines the biosynthesis of branched-chain and/or straight-chain of fatty acids. The chain is Beta-ketoacyl-[acyl-carrier-protein] synthase III from Rickettsia prowazekii (strain Madrid E).